The following is a 422-amino-acid chain: MSVTVVLGAQWGDEGKGKLADILAHESQICCRAQGGNNAGHTIVANGVTYDFHILPSGLVNPGCINVIGSGCVVHVPSFFKELEALEKHGLKTDGRIFISDRAHVVFDVHQMVDGLEEVELAGGFIGTTGKGIGPTYSTKMTRSGLRMCDLFDEKIFEAKLRRIAMGYQKRFGDLLKYDVDDEIARYKDLRGKLAPYVVDQIPLLASAKEKNAKILVEGANALMLDIDYGTYPFVTSSNTGLGGVITGLNLGWRSLREVIGVVKAYTTRVGSGPFPTEQLNEIGEKMQSVGHEVGVTTGRKRRCGWLDLVVVKHSHACNDYTAINLTKLDILDDFDELKVATSYSYNGETLEGFPANPEILAQVEVQYDTLPGWKKPTTGVTNYYDLASQARSYIEYIEKFVGVKVKWIGVGPARDHMITRS.

GTP-binding positions include 12–18 (GDEGKGK) and 40–42 (GHT). The active-site Proton acceptor is the D13. Residues D13 and G40 each contribute to the Mg(2+) site. IMP-binding positions include 13-16 (DEGK), 38-41 (NAGH), T129, R143, N221, T236, and R300. Residue H41 is the Proton donor of the active site. 296-302 (VTTGRKR) serves as a coordination point for substrate. Residues R302, 328-330 (KLD), and 410-412 (GVG) each bind GTP.

This sequence belongs to the adenylosuccinate synthetase family. In terms of assembly, homodimer. Requires Mg(2+) as cofactor.

It is found in the cytoplasm. It carries out the reaction IMP + L-aspartate + GTP = N(6)-(1,2-dicarboxyethyl)-AMP + GDP + phosphate + 2 H(+). The protein operates within purine metabolism; AMP biosynthesis via de novo pathway; AMP from IMP: step 1/2. Plays an important role in the de novo pathway and in the salvage pathway of purine nucleotide biosynthesis. Catalyzes the first committed step in the biosynthesis of AMP from IMP. This Pyrenophora tritici-repentis (strain Pt-1C-BFP) (Wheat tan spot fungus) protein is Adenylosuccinate synthetase.